Consider the following 206-residue polypeptide: dCTP deaminase, dUMP-forming (206 aa).

DCTP contacts are provided by residues 117-122, Asp-135, 143-145, Gln-163, Tyr-177, Lys-184, and Gln-188; these read RSSFGR and TLE. Glu-145 (proton donor/acceptor) is an active-site residue.

The protein belongs to the dCTP deaminase family. As to quaternary structure, homotrimer.

The catalysed reaction is dCTP + 2 H2O = dUMP + NH4(+) + diphosphate. The protein operates within pyrimidine metabolism; dUMP biosynthesis; dUMP from dCTP: step 1/1. Its function is as follows. Bifunctional enzyme that catalyzes both the deamination of dCTP to dUTP and the hydrolysis of dUTP to dUMP without releasing the toxic dUTP intermediate. The chain is dCTP deaminase, dUMP-forming from Methanococcus maripaludis (strain DSM 14266 / JCM 13030 / NBRC 101832 / S2 / LL).